Consider the following 147-residue polypeptide: uncharacterized protein (147 aa).

In terms of domain architecture, HTH marR-type spans 1 to 137 (MRDNTIGSLI…LYELMTKVHK (137 aa)). Residues 53 to 76 (QMELAEKVTVTQGGISRMLTRLEK) constitute a DNA-binding region (H-T-H motif).

This is an uncharacterized protein from Bacillus cereus (strain ATCC 10987 / NRS 248).